The following is a 426-amino-acid chain: Serine hydroxymethyltransferase (426 aa).

(6S)-5,6,7,8-tetrahydrofolate is bound by residues L113 and 117 to 119; that span reads GHL. N6-(pyridoxal phosphate)lysine is present on K222. 363 to 365 is a binding site for (6S)-5,6,7,8-tetrahydrofolate; the sequence is SAF.

It belongs to the SHMT family. Homodimer. The cofactor is pyridoxal 5'-phosphate.

The protein resides in the cytoplasm. The enzyme catalyses (6R)-5,10-methylene-5,6,7,8-tetrahydrofolate + glycine + H2O = (6S)-5,6,7,8-tetrahydrofolate + L-serine. The protein operates within one-carbon metabolism; tetrahydrofolate interconversion. It functions in the pathway amino-acid biosynthesis; glycine biosynthesis; glycine from L-serine: step 1/1. Catalyzes the reversible interconversion of serine and glycine with tetrahydrofolate (THF) serving as the one-carbon carrier. This reaction serves as the major source of one-carbon groups required for the biosynthesis of purines, thymidylate, methionine, and other important biomolecules. Also exhibits THF-independent aldolase activity toward beta-hydroxyamino acids, producing glycine and aldehydes, via a retro-aldol mechanism. This Bacteroides thetaiotaomicron (strain ATCC 29148 / DSM 2079 / JCM 5827 / CCUG 10774 / NCTC 10582 / VPI-5482 / E50) protein is Serine hydroxymethyltransferase.